Consider the following 464-residue polypeptide: uncharacterized protein (464 aa).

Transmembrane regions (helical) follow at residues 7-27 (VLNV…LRTL), 37-57 (LVFY…LVAA), 94-114 (VVWY…LIAP), 121-141 (FYLL…NCFG), 153-173 (ASIG…VWIF), 196-216 (LSLF…AVHA), 231-251 (FYSA…IVIV), 282-302 (VIAV…IIGP), 329-349 (VAIL…FILL), 359-379 (LSDL…AAAI), 401-421 (MSLI…VGFI), and 432-452 (FLFE…PWLF).

Belongs to the amino acid-polyamine-organocation (APC) superfamily.

The protein localises to the cell membrane. This is an uncharacterized protein from Legionella pneumophila subsp. pneumophila (strain Philadelphia 1 / ATCC 33152 / DSM 7513).